Reading from the N-terminus, the 529-residue chain is Bifunctional purine biosynthesis protein PurH (529 aa).

One can recognise an MGS-like domain in the interval 1-148 (MEQSFLPIRC…KNYKYVTVVV (148 aa)).

It belongs to the PurH family.

The enzyme catalyses (6R)-10-formyltetrahydrofolate + 5-amino-1-(5-phospho-beta-D-ribosyl)imidazole-4-carboxamide = 5-formamido-1-(5-phospho-D-ribosyl)imidazole-4-carboxamide + (6S)-5,6,7,8-tetrahydrofolate. The catalysed reaction is IMP + H2O = 5-formamido-1-(5-phospho-D-ribosyl)imidazole-4-carboxamide. The protein operates within purine metabolism; IMP biosynthesis via de novo pathway; 5-formamido-1-(5-phospho-D-ribosyl)imidazole-4-carboxamide from 5-amino-1-(5-phospho-D-ribosyl)imidazole-4-carboxamide (10-formyl THF route): step 1/1. Its pathway is purine metabolism; IMP biosynthesis via de novo pathway; IMP from 5-formamido-1-(5-phospho-D-ribosyl)imidazole-4-carboxamide: step 1/1. This Wigglesworthia glossinidia brevipalpis protein is Bifunctional purine biosynthesis protein PurH.